Consider the following 401-residue polypeptide: Inactive leucine-rich repeat receptor-like protein kinase CORYNE (401 aa).

Residues 1-33 (MKQRRRRNGCSSSNTISLLLLFFLVFFSRTSTS) form the signal peptide. Over 34 to 62 (TSCRRRTVKHLSTTSTSSTPLESRITSKV) the chain is Extracellular. Residues 63-83 (IVISIVSGILTGLVSALVLAF) traverse the membrane as a helical segment. At 84–401 (LVRSIVKFMK…VHMLTQLHSF (318 aa)) the chain is on the cytoplasmic side. The Protein kinase domain maps to 118 to 401 (SNGIQLLGSD…VHMLTQLHSF (284 aa)). Residues 124 to 132 (LGSDLNGKY) and lysine 146 contribute to the ATP site.

Belongs to the protein kinase superfamily. Ser/Thr protein kinase family. Self-interacts. Parts of a tetrameric complex made of two CLV2/CRN heterodimers that can interact with CLV3 and CLE peptides. CLV2/CRN heterodimer interacts with CLV1 homodimers. Interacts with CLV1 and CLV2. CLV2/CRN heterodimer can interact with BAM3. Present in roots, stems, leaves, inflorescence, flowers and siliques. Mostly expressed in shoot tips and, to a lesser extent, in young organs and roots. Also expressed in the inner tissues of the proximal root meristem. Expressed in the vascular cylinder of root tips, mostly in phloem poles.

The protein resides in the cell membrane. It is found in the endoplasmic reticulum membrane. In terms of biological role, involved in the perception of CLV3 and CLV3-like (CLE) peptides, that act as extracellular signals regulating meristem maintenance. Modulates root, shoot and flower apical meristem maintenance and floral organ development regulation, probably via CLAVATA (CLV)-like pathways involving at least CLV3 and CLE19. In complex with CLV2, perceives secreted CLV3-like effector proteins from plant-parasitic cyst nematodes as ligand mimics of the plant CLE signaling pathway. This recognition is required for proper feeding structure (syncytium) development and ultimately successful nematode infection. CLE14 perception by CLV2/CRN complex triggers root meristem differentiation. Required for the sensing of the root CLE peptides (e.g. CLE8, CLE9/CLE10, CLE11, CLE13, CLE14, CLE16, CLE17, CLE18, CLE20, CLE21, CLE25, CLE26, CLE40, CLE41/CLE44 and CLE45), which also involves CLV2 and leads to root growth regulation, mostly in the phloem and protophloem. Promotes the accumulation of BAM3, especially at later stages of protophloem development. The protein is Inactive leucine-rich repeat receptor-like protein kinase CORYNE of Arabidopsis thaliana (Mouse-ear cress).